A 342-amino-acid chain; its full sequence is Putative gluconeogenesis factor (342 aa).

The tract at residues 318–342 is disordered; that stretch reads SEPPVAATQEIPIDGGRPRGDDAWR. Phosphothreonine is present on T325. The segment covering 333-342 has biased composition (basic and acidic residues); that stretch reads GRPRGDDAWR.

Belongs to the gluconeogenesis factor family. In terms of processing, phosphorylated by PknA and/or PknB.

The protein resides in the cytoplasm. Functionally, required for morphogenesis under gluconeogenic growth conditions. The sequence is that of Putative gluconeogenesis factor from Mycobacterium tuberculosis (strain CDC 1551 / Oshkosh).